We begin with the raw amino-acid sequence, 152 residues long: uncharacterized protein (152 aa).

Positions 127 to 152 (EKEKAERKAEKAKKNKKKSSTKTKKK) are disordered. Residues 136-152 (EKAKKNKKKSSTKTKKK) show a composition bias toward basic residues.

It belongs to the mimivirus R546 family.

This is an uncharacterized protein from Sputnik virophage.